We begin with the raw amino-acid sequence, 239 residues long: Glandular kallikrein, prostatic (239 aa).

The Peptidase S1 domain occupies 1–236; sequence VIGGQECARD…YREWIERTMA (236 aa). Disulfide bonds link C7–C151, C26–C42, C128–C197, C162–C176, and C187–C212. H41 (charge relay system) is an active-site residue. N-linked (GlcNAc...) asparagine glycosylation is present at N78. Catalysis depends on D96, which acts as the Charge relay system. N169 is a glycosylation site (N-linked (GlcNAc...) asparagine). S191 acts as the Charge relay system in catalysis.

It belongs to the peptidase S1 family. Kallikrein subfamily.

The catalysed reaction is Preferential cleavage of Arg-|-Xaa bonds in small molecule substrates. Highly selective action to release kallidin (lysyl-bradykinin) from kininogen involves hydrolysis of Met-|-Xaa or Leu-|-Xaa.. Its function is as follows. Glandular kallikreins cleave Met-Lys and Arg-Ser bonds in kininogen to release Lys-bradykinin. The protein is Glandular kallikrein, prostatic of Cavia porcellus (Guinea pig).